Reading from the N-terminus, the 449-residue chain is Dynein axonemal assembly factor 3 (449 aa).

This sequence belongs to the DNAAF3 family.

It is found in the cytoplasm. The protein resides in the dynein axonemal particle. In terms of biological role, required for the assembly of axonemal inner and outer dynein arms. Involved in preassembly of dyneins into complexes before their transport into cilia. The protein is Dynein axonemal assembly factor 3 (dnaaf3) of Xenopus tropicalis (Western clawed frog).